An 86-amino-acid polypeptide reads, in one-letter code: Small ribosomal subunit protein uS17 (86 aa).

It belongs to the universal ribosomal protein uS17 family. In terms of assembly, part of the 30S ribosomal subunit.

Functionally, one of the primary rRNA binding proteins, it binds specifically to the 5'-end of 16S ribosomal RNA. This Roseiflexus sp. (strain RS-1) protein is Small ribosomal subunit protein uS17.